The chain runs to 295 residues: MAGLNVSLSFFFATFTLCEAARRASKALLPVGAYEVFAREAMRTLVELGPWAGDFGPDLLLTLLFLLFLAHGVTLDGASANPTVSLQEFLMAEESLPGTLLKLAAQGLGMQAACTLTRLCWAWELSDLHLLQSLMAQSCSSALRTSVPHGALVEAACAFCFHLTLLHLRHSPPAYSGPAVALLVTVTAYTAGPFTSAFFNPALAASVTFACSGHTLLEYVQVYWLGPLTGMVLAVLLHQGRLPHLFQRNLFYGQKNKYRAPRGKPAPASGDTQTPAKGSSVREPGRSGVEGPHSS.

The Cytoplasmic portion of the chain corresponds to 1–22 (MAGLNVSLSFFFATFTLCEAAR). A helical membrane pass occupies residues 23–41 (RASKALLPVGAYEVFAREA). The Extracellular segment spans residues 42–55 (MRTLVELGPWAGDF). Residues 56–74 (GPDLLLTLLFLLFLAHGVT) traverse the membrane as a helical segment. Residues 75–76 (LD) are Cytoplasmic-facing. Residues 77–114 (GASANPTVSLQEFLMAEESLPGTLLKLAAQGLGMQAAC) constitute an intramembrane region (discontinuously helical). Residues 81–83 (NPT) carry the NPA 1 motif. Over 115 to 120 (TLTRLC) the chain is Cytoplasmic. The chain crosses the membrane as a helical span at residues 121 to 142 (WAWELSDLHLLQSLMAQSCSSA). Topologically, residues 143-145 (LRT) are extracellular. A helical transmembrane segment spans residues 146–166 (SVPHGALVEAACAFCFHLTLL). Topologically, residues 167-174 (HLRHSPPA) are cytoplasmic. Residues 175–191 (YSGPAVALLVTVTAYTA) form a helical membrane-spanning segment. Residues 192–194 (GPF) are Extracellular-facing. An intramembrane region (discontinuously helical) is located at residues 195–206 (TSAFFNPALAAS). An NPA 2 motif is present at residues 200–202 (NPA). At 207–223 (VTFACSGHTLLEYVQVY) the chain is on the extracellular side. A helical transmembrane segment spans residues 224 to 244 (WLGPLTGMVLAVLLHQGRLPH). At 245–295 (LFQRNLFYGQKNKYRAPRGKPAPASGDTQTPAKGSSVREPGRSGVEGPHSS) the chain is on the cytoplasmic side. Residues 257-295 (KYRAPRGKPAPASGDTQTPAKGSSVREPGRSGVEGPHSS) are disordered.

Belongs to the MIP/aquaporin (TC 1.A.8) family. AQP11/AQP12 subfamily. As to quaternary structure, homotetramer; each monomer provides an independent water pore.

The protein resides in the membrane. The catalysed reaction is H2O(in) = H2O(out). Its function is as follows. Putative aquaporin. Could form homotetrameric transmembrane channels, with each monomer independently mediating water transport across the plasma membrane along its osmotic gradient. In Homo sapiens (Human), this protein is Putative aquaporin-12B.